Consider the following 343-residue polypeptide: Mitochondrial import inner membrane translocase subunit TIM50-A (343 aa).

The Mitochondrial matrix portion of the chain corresponds to 1-57; it reads MHKIVWFGTLNKSIGYIGKKKTCLLSPCEKICLNSARKTVQRCDKNYSPPKLRRIKN. Residues 58 to 77 form a helical membrane-spanning segment; it reads FYTYSVVLGSLFSIVMWAIY. At 78-343 the chain is on the mitochondrial intermembrane side; sequence KLGKPEEDHR…GRSLRGSSIK (266 aa). Residues 135-278 form the FCP1 homology domain; that stretch reads YIQPPYSLVL…FDLTAFLQLI (144 aa).

Belongs to the TIM50 family. Component of the TIM23 complex at least composed of Tim23, Tim17 (Tim17a1, Tim17a2 or Tim17b1) and a Tim50. In terms of tissue distribution, exclusively expressed in the testis.

The protein localises to the mitochondrion inner membrane. Essential component of the TIM23 complex, a complex that mediates the translocation of transit peptide-containing proteins across the mitochondrial inner membrane. This Drosophila melanogaster (Fruit fly) protein is Mitochondrial import inner membrane translocase subunit TIM50-A (ttm3).